Reading from the N-terminus, the 267-residue chain is uncharacterized protein (267 aa).

The stretch at 37 to 62 forms a coiled coil; that stretch reads DSSNNYKKKYKKYKRKYIDLKKQLNY.

This is an uncharacterized protein from Acanthamoeba polyphaga (Amoeba).